The sequence spans 184 residues: Adenine phosphoribosyltransferase (184 aa).

The protein belongs to the purine/pyrimidine phosphoribosyltransferase family. In terms of assembly, homodimer.

Its subcellular location is the cytoplasm. It carries out the reaction AMP + diphosphate = 5-phospho-alpha-D-ribose 1-diphosphate + adenine. It functions in the pathway purine metabolism; AMP biosynthesis via salvage pathway; AMP from adenine: step 1/1. Catalyzes a salvage reaction resulting in the formation of AMP, that is energically less costly than de novo synthesis. In Parafrankia sp. (strain EAN1pec), this protein is Adenine phosphoribosyltransferase.